The primary structure comprises 375 residues: MSTAGKVIKCKAAVLWEVKKPFSIEEVEVAPPKAHEVRIKMVAVGICRSDDHVVSGTLVTPLPAILGHEAAGIVEGVGEGVTTVKPGDKVIPLFTPQCGKCRVCKNPESNYCFKNDLSNPRGTMQDGTRRFTCGGKPIHHFLGISTFSQYTVVDENAVAKIDAASPLEKVCLIGCGFSTGYGPAVKVAKVTPGSTCAVFGLGGVGLSAVMGCKAAGAARIIAVDINKDKFAKAKELGATECINPQDYKKPIQEVLKEMTDGGVDFSFEVIGRLDTIMASLLCCHEACGTSVIVGVPPDSQNLSINPVLLLTGRTWKGAIFGGFKSKESVPKLVSDFMAKKFSLDALITNVLPFEKINEGFDLLRSGKSIRTILMF.

Ser2 is modified (N-acetylserine). Ser23 is subject to Phosphoserine. 7 residues coordinate Zn(2+): Cys47, His68, Cys98, Cys101, Cys104, Cys112, and Cys175. NAD(+) contacts are provided by residues 200-205, Asp224, Lys229, Ile270, 293-295, 318-320, and Arg370; these read GLGGVG, VGV, and AIF.

This sequence belongs to the zinc-containing alcohol dehydrogenase family. In terms of assembly, dimer of identical or non-identical chains of class I alcohol dehydrogenase: ADH1A, ADH1B, and ADH1C. The cofactor is Zn(2+). Expressed in kidney.

It localises to the cytoplasm. It carries out the reaction a primary alcohol + NAD(+) = an aldehyde + NADH + H(+). The enzyme catalyses ethanol + NAD(+) = acetaldehyde + NADH + H(+). Alcohol dehydrogenase. Exhibits high activity for ethanol oxidation and plays a major role in ethanol catabolism. This chain is Alcohol dehydrogenase 1C (ADH1C), found in Papio hamadryas (Hamadryas baboon).